Here is a 147-residue protein sequence, read N- to C-terminus: uncharacterized protein (147 aa).

The disordered stretch occupies residues Met-1 to Arg-37. Over residues His-15–Val-29 the composition is skewed to polar residues. Residues Pro-71–Val-147 form the Cytochrome b5 heme-binding domain. Positions 106 and 129 each coordinate heme.

It belongs to the cytochrome b5 family.

This is an uncharacterized protein from Schizosaccharomyces pombe (strain 972 / ATCC 24843) (Fission yeast).